The primary structure comprises 198 residues: 3-isopropylmalate dehydratase small subunit (198 aa).

It belongs to the LeuD family. LeuD type 1 subfamily. In terms of assembly, heterodimer of LeuC and LeuD.

It carries out the reaction (2R,3S)-3-isopropylmalate = (2S)-2-isopropylmalate. It functions in the pathway amino-acid biosynthesis; L-leucine biosynthesis; L-leucine from 3-methyl-2-oxobutanoate: step 2/4. In terms of biological role, catalyzes the isomerization between 2-isopropylmalate and 3-isopropylmalate, via the formation of 2-isopropylmaleate. This is 3-isopropylmalate dehydratase small subunit from Colwellia psychrerythraea (strain 34H / ATCC BAA-681) (Vibrio psychroerythus).